The following is a 45-amino-acid chain: Large ribosomal subunit protein bL36 (45 aa).

Residues 1 to 20 (MKVSSSIKADPSKGDKLVRR) form a disordered region.

The protein belongs to the bacterial ribosomal protein bL36 family.

In Chlamydia abortus (strain DSM 27085 / S26/3) (Chlamydophila abortus), this protein is Large ribosomal subunit protein bL36.